The chain runs to 326 residues: Tagatose 1,6-diphosphate aldolase (326 aa).

The protein belongs to the aldolase LacD family.

The enzyme catalyses D-tagatofuranose 1,6-bisphosphate = D-glyceraldehyde 3-phosphate + dihydroxyacetone phosphate. Its pathway is carbohydrate metabolism; D-tagatose 6-phosphate degradation; D-glyceraldehyde 3-phosphate and glycerone phosphate from D-tagatose 6-phosphate: step 2/2. The sequence is that of Tagatose 1,6-diphosphate aldolase from Staphylococcus aureus (strain bovine RF122 / ET3-1).